The sequence spans 197 residues: uncharacterized protein (197 aa).

An N-terminal signal peptide occupies residues 1–23 (MSARAPKELRLALPPCLLNRTFA). Residues N19 and N26 are each glycosylated (N-linked (GlcNAc...) asparagine). The Extracellular portion of the chain corresponds to 24 to 61 (SPNASGSGNTGARGPGAGGSGTCITQVGQQLFQSFSST). The chain crosses the membrane as a helical span at residues 62–82 (LVLIVLVTLIFCLIVLSLSTF). The Cytoplasmic portion of the chain corresponds to 83 to 197 (HIHKRRMKKR…EGLLQTVVLS (115 aa)). Residues 94–180 (MQRAQEEYER…SSPQGAHAAS (87 aa)) are disordered. Basic and acidic residues-rich tracts occupy residues 96–107 (RAQEEYERDHCS) and 125–136 (HTKETRLERQPR). Over residues 147-161 (SSSSSSSPGLLCQGP) the composition is skewed to low complexity. Positions 162–171 (CAPPPPPPAS) are enriched in pro residues.

The protein resides in the membrane. This is an uncharacterized protein from Macaca fascicularis (Crab-eating macaque).